Reading from the N-terminus, the 485-residue chain is uncharacterized protein (485 aa).

Residues 1-30 are Cytoplasmic-facing; the sequence is MFSWANIGSNEYLPLKNDRKAYLNQWAKRS. Residues 31–51 form a helical membrane-spanning segment; that stretch reads GLAIAAICILGILILAIVKLF. Topologically, residues 52 to 485 are extracellular; that stretch reads CFKAIIFPIV…DIEQAYSKLI (434 aa). The N-linked (GlcNAc...) asparagine glycan is linked to asparagine 67. Positions 74–404 are phosphodiesterase; sequence STVIVISLDG…YEPLGVHGYD (331 aa). Threonine 118 acts as the Nucleophile in catalysis. 4 N-linked (GlcNAc...) asparagine glycosylation sites follow: asparagine 306, asparagine 338, asparagine 453, and asparagine 467.

This sequence belongs to the nucleotide pyrophosphatase/phosphodiesterase family.

The protein resides in the membrane. This is an uncharacterized protein from Schizosaccharomyces pombe (strain 972 / ATCC 24843) (Fission yeast).